A 342-amino-acid chain; its full sequence is Dihydroorotase (342 aa).

Positions 13 and 15 each coordinate Zn(2+). Residues 15–17 (HLR) and asparagine 41 each bind substrate. Zn(2+)-binding residues include lysine 98, histidine 135, and histidine 173. Lysine 98 is modified (N6-carboxylysine). Residue histidine 135 coordinates substrate. Residue leucine 218 coordinates substrate. Residue aspartate 246 participates in Zn(2+) binding. Residue aspartate 246 is part of the active site. The substrate site is built by histidine 250 and alanine 262.

Belongs to the metallo-dependent hydrolases superfamily. DHOase family. Class II DHOase subfamily. In terms of assembly, homodimer. The cofactor is Zn(2+).

The enzyme catalyses (S)-dihydroorotate + H2O = N-carbamoyl-L-aspartate + H(+). It functions in the pathway pyrimidine metabolism; UMP biosynthesis via de novo pathway; (S)-dihydroorotate from bicarbonate: step 3/3. Its function is as follows. Catalyzes the reversible cyclization of carbamoyl aspartate to dihydroorotate. In Aliivibrio salmonicida (strain LFI1238) (Vibrio salmonicida (strain LFI1238)), this protein is Dihydroorotase.